The sequence spans 485 residues: Amyloid beta A4 precursor protein-binding family B member 1-interacting protein (485 aa).

Over residues Gln-84–Phe-107 the composition is skewed to polar residues. The tract at residues Gln-84 to Ala-157 is disordered. Residues Leu-125–Pro-147 show a composition bias toward pro residues. The region spanning Lys-175 to Lys-262 is the Ras-associating domain. Positions Val-305 to Tyr-414 constitute a PH domain.

The protein belongs to the MRL family.

Its subcellular location is the cell membrane. It is found in the cytoplasm. The protein localises to the cytoskeleton. Its function is as follows. Appears to function in the signal transduction from Ras activation to actin cytoskeletal remodeling. The protein is Amyloid beta A4 precursor protein-binding family B member 1-interacting protein (APBB1IP) of Gallus gallus (Chicken).